A 420-amino-acid polypeptide reads, in one-letter code: Pyridinium-3,5-bisthiocarboxylic acid mononucleotide nickel insertion protein (420 aa).

Residues asparagine 81 to histidine 104 are disordered. Positions glutamate 90–serine 99 are enriched in basic and acidic residues.

It belongs to the LarC family.

It carries out the reaction Ni(II)-pyridinium-3,5-bisthiocarboxylate mononucleotide = pyridinium-3,5-bisthiocarboxylate mononucleotide + Ni(2+). Involved in the biosynthesis of a nickel-pincer cofactor ((SCS)Ni(II) pincer complex). Binds Ni(2+), and functions in nickel delivery to pyridinium-3,5-bisthiocarboxylic acid mononucleotide (P2TMN), to form the mature cofactor. Is thus probably required for the activation of nickel-pincer cofactor-dependent enzymes. In Clostridium acetobutylicum (strain ATCC 824 / DSM 792 / JCM 1419 / IAM 19013 / LMG 5710 / NBRC 13948 / NRRL B-527 / VKM B-1787 / 2291 / W), this protein is Pyridinium-3,5-bisthiocarboxylic acid mononucleotide nickel insertion protein.